Here is a 291-residue protein sequence, read N- to C-terminus: Nucleotide-binding protein LJ_0866 (291 aa).

13-20 (GMSGAGKT) contributes to the ATP binding site. GTP is bound at residue 63-66 (DLRV).

This sequence belongs to the RapZ-like family.

Displays ATPase and GTPase activities. The chain is Nucleotide-binding protein LJ_0866 from Lactobacillus johnsonii (strain CNCM I-12250 / La1 / NCC 533).